Consider the following 211-residue polypeptide: Proteasome subunit beta (211 aa).

Residues 1 to 9 constitute a propeptide, removed in mature form; by autocatalysis; that stretch reads MSEAETLKG. The active-site Nucleophile is T10.

This sequence belongs to the peptidase T1B family. In terms of assembly, the 20S proteasome core is composed of 14 alpha and 14 beta subunits that assemble into four stacked heptameric rings, resulting in a barrel-shaped structure. The two inner rings, each composed of seven catalytic beta subunits, are sandwiched by two outer rings, each composed of seven alpha subunits. The catalytic chamber with the active sites is on the inside of the barrel. Has a gated structure, the ends of the cylinder being occluded by the N-termini of the alpha-subunits. Is capped at one or both ends by the proteasome regulatory ATPase, PAN.

It is found in the cytoplasm. It carries out the reaction Cleavage of peptide bonds with very broad specificity.. The formation of the proteasomal ATPase PAN-20S proteasome complex, via the docking of the C-termini of PAN into the intersubunit pockets in the alpha-rings, triggers opening of the gate for substrate entry. Interconversion between the open-gate and close-gate conformations leads to a dynamic regulation of the 20S proteasome proteolysis activity. In terms of biological role, component of the proteasome core, a large protease complex with broad specificity involved in protein degradation. The polypeptide is Proteasome subunit beta (Methanosphaerula palustris (strain ATCC BAA-1556 / DSM 19958 / E1-9c)).